A 239-amino-acid chain; its full sequence is Orotidine 5'-phosphate decarboxylase (239 aa).

Residues D11, K33, 60-69, T123, R185, Q194, G214, and R215 each bind substrate; that span reads DLKCHDIPTT. The Proton donor role is filled by K62.

Belongs to the OMP decarboxylase family. Type 1 subfamily. In terms of assembly, homodimer.

The enzyme catalyses orotidine 5'-phosphate + H(+) = UMP + CO2. It participates in pyrimidine metabolism; UMP biosynthesis via de novo pathway; UMP from orotate: step 2/2. Functionally, catalyzes the decarboxylation of orotidine 5'-monophosphate (OMP) to uridine 5'-monophosphate (UMP). This chain is Orotidine 5'-phosphate decarboxylase, found in Bacillus licheniformis (strain ATCC 14580 / DSM 13 / JCM 2505 / CCUG 7422 / NBRC 12200 / NCIMB 9375 / NCTC 10341 / NRRL NRS-1264 / Gibson 46).